Reading from the N-terminus, the 198-residue chain is Peptidyl-tRNA hydrolase (198 aa).

Residue Tyr14 participates in tRNA binding. His19 functions as the Proton acceptor in the catalytic mechanism. 3 residues coordinate tRNA: Tyr64, Asn66, and Asn112.

This sequence belongs to the PTH family. Monomer.

Its subcellular location is the cytoplasm. The catalysed reaction is an N-acyl-L-alpha-aminoacyl-tRNA + H2O = an N-acyl-L-amino acid + a tRNA + H(+). Its function is as follows. Hydrolyzes ribosome-free peptidyl-tRNAs (with 1 or more amino acids incorporated), which drop off the ribosome during protein synthesis, or as a result of ribosome stalling. Functionally, catalyzes the release of premature peptidyl moieties from peptidyl-tRNA molecules trapped in stalled 50S ribosomal subunits, and thus maintains levels of free tRNAs and 50S ribosomes. This chain is Peptidyl-tRNA hydrolase, found in Beijerinckia indica subsp. indica (strain ATCC 9039 / DSM 1715 / NCIMB 8712).